A 618-amino-acid chain; its full sequence is Uptake hydrogenase large subunit (618 aa).

The Ni(2+) site is built by Cys75, Cys78, Cys597, and Cys600.

It belongs to the [NiFe]/[NiFeSe] hydrogenase large subunit family. Heterodimer of a large and a small subunit. The cofactor is Ni(2+).

It localises to the cell membrane. The catalysed reaction is H2 + A = AH2. In terms of biological role, this enzyme recycles the H(2) produced by nitrogenase to increase the production of ATP and to protect nitrogenase against inhibition or damage by O(2) under carbon- or phosphate-limited conditions. The protein is Uptake hydrogenase large subunit (hoxG) of Cupriavidus necator (strain ATCC 17699 / DSM 428 / KCTC 22496 / NCIMB 10442 / H16 / Stanier 337) (Ralstonia eutropha).